Here is a 419-residue protein sequence, read N- to C-terminus: Adenylosuccinate synthetase (419 aa).

GTP-binding positions include 12–18 (GDEGKGK) and 40–42 (GHT). The active-site Proton acceptor is Asp-13. Mg(2+)-binding residues include Asp-13 and Gly-40. IMP-binding positions include 13 to 16 (DEGK), 38 to 41 (NAGH), Thr-128, Arg-142, Gln-220, Thr-235, and Arg-299. His-41 serves as the catalytic Proton donor. Residue 295-301 (SITKRPR) participates in substrate binding. GTP contacts are provided by residues Arg-301, 327-329 (KSD), and 407-409 (SLG).

Belongs to the adenylosuccinate synthetase family. As to quaternary structure, homodimer. Mg(2+) is required as a cofactor.

Its subcellular location is the cytoplasm. The catalysed reaction is IMP + L-aspartate + GTP = N(6)-(1,2-dicarboxyethyl)-AMP + GDP + phosphate + 2 H(+). The protein operates within purine metabolism; AMP biosynthesis via de novo pathway; AMP from IMP: step 1/2. Its function is as follows. Plays an important role in the de novo pathway of purine nucleotide biosynthesis. Catalyzes the first committed step in the biosynthesis of AMP from IMP. In Azobacteroides pseudotrichonymphae genomovar. CFP2, this protein is Adenylosuccinate synthetase.